The following is a 1120-amino-acid chain: Transcription-repair-coupling factor (1120 aa).

In terms of domain architecture, Helicase ATP-binding spans 591 to 756 (DLSNGMLMDR…MTGLKELSII (166 aa)). 604–611 (GDVGFGKT) contacts ATP. The short motif at 709-712 (DEEQ) is the DEEQ box element. Residues 777 to 931 (IIRDALLHEH…GFTIASHDMD (155 aa)) form the Helicase C-terminal domain.

In the N-terminal section; belongs to the UvrB family. It in the C-terminal section; belongs to the helicase family. RecG subfamily.

It is found in the cytoplasm. In terms of biological role, couples transcription and DNA repair by recognizing RNA polymerase (RNAP) stalled at DNA lesions. Mediates ATP-dependent release of RNAP and its truncated transcript from the DNA, and recruitment of nucleotide excision repair machinery to the damaged site. The polypeptide is Transcription-repair-coupling factor (Rickettsia bellii (strain RML369-C)).